Here is a 299-residue protein sequence, read N- to C-terminus: Regucalcin (299 aa).

Residue Glu18 coordinates a divalent metal cation. The substrate site is built by Arg101, Asn103, and Glu121. The residue at position 144 (Lys144) is an N6-succinyllysine. 2 residues coordinate a divalent metal cation: Asn154 and Asp204. The active-site Proton donor/acceptor is the Asp204. N6-succinyllysine occurs at positions 244 and 253.

Belongs to the SMP-30/CGR1 family. Monomer. Zn(2+) is required as a cofactor. The cofactor is Mn(2+). Ca(2+) serves as cofactor. It depends on Mg(2+) as a cofactor. In terms of tissue distribution, mainly present in the liver. Weak expression was found in the brain, lung and kidney.

It is found in the cytoplasm. The enzyme catalyses D-glucono-1,5-lactone + H2O = D-gluconate + H(+). It participates in cofactor biosynthesis; L-ascorbate biosynthesis via UDP-alpha-D-glucuronate pathway; L-ascorbate from UDP-alpha-D-glucuronate: step 3/4. Gluconolactonase with low activity towards other sugar lactones, including gulonolactone and galactonolactone. Catalyzes a key step in ascorbic acid (vitamin C) biosynthesis. Can also hydrolyze diisopropyl phosphorofluoridate and phenylacetate (in vitro). Calcium-binding protein. Modulates Ca(2+) signaling, and Ca(2+)-dependent cellular processes and enzyme activities. In Mus musculus (Mouse), this protein is Regucalcin (Rgn).